The chain runs to 301 residues: Nucleotide-binding protein ELI_02120 (301 aa).

12–19 contributes to the ATP binding site; sequence GMSGAGKS. Residue 62–65 coordinates GTP; the sequence is DSRT.

This sequence belongs to the RapZ-like family.

Its function is as follows. Displays ATPase and GTPase activities. The sequence is that of Nucleotide-binding protein ELI_02120 from Erythrobacter litoralis (strain HTCC2594).